The chain runs to 506 residues: Conglutin alpha 1 (506 aa).

A signal peptide spans 1–19 (MANKLLALSLFLLFSGCFA). 2 disulfide bridges follow: Cys31-Cys64 and Cys107-Cys328. Positions 36–235 (LNALEPDNSV…AFSVDREIVR (200 aa)) constitute a Cupin type-1 1 domain. Disordered regions lie at residues 111–131 (YEEP…RHQK), 195–216 (QQKE…NVLS), and 251–322 (VKEG…DRNG). Over residues 195–207 (QQKEGGQGQQQEG) the composition is skewed to low complexity. The span at 270 to 280 (EEEEEEEEEEE) shows a compositional bias: acidic residues. Basic residues predominate over residues 306–315 (QVRRVRRPHH). Residues 334–483 (HNIGQSTSPD…AFNLDRDQAR (150 aa)) enclose the Cupin type-1 2 domain. Asn397 and Asn439 each carry an N-linked (GlcNAc...) asparagine glycan.

This sequence belongs to the 11S seed storage protein (globulins) family. As to quaternary structure, hexamer; each subunit is composed of an acidic and a basic chain derived from a single precursor and linked by a disulfide bond. Component of globulins complexes which accumulate in seeds. Expressed in developing cotyledons and in the embryonic axis of germinating seeds.

Functionally, sulfur-rich seed storage protein. This protein found in the seeds of many leguminous and non-leguminous plants is the source of sulfur-containing amino acids in seed meals. This is Conglutin alpha 1 from Lupinus angustifolius (Narrow-leaved blue lupine).